A 152-amino-acid polypeptide reads, in one-letter code: Large ribosomal subunit protein uL15 (152 aa).

Polar residues predominate over residues 1 to 13 (MLTLGNLSPQEGS). A disordered region spans residues 1–62 (MLTLGNLSPQ…GGQMPLQRRL (62 aa)). Residues 31–40 (TAGRGHKGFK) are compositionally biased toward basic residues.

It belongs to the universal ribosomal protein uL15 family. In terms of assembly, part of the 50S ribosomal subunit.

In terms of biological role, binds to the 23S rRNA. This Desulfotalea psychrophila (strain LSv54 / DSM 12343) protein is Large ribosomal subunit protein uL15.